We begin with the raw amino-acid sequence, 310 residues long: 4-diphosphocytidyl-2-C-methyl-D-erythritol kinase (310 aa).

The active site involves Lys-12. Residue 97-107 (PIGAGLAGGSS) coordinates ATP. Asp-139 is an active-site residue.

It belongs to the GHMP kinase family. IspE subfamily.

It carries out the reaction 4-CDP-2-C-methyl-D-erythritol + ATP = 4-CDP-2-C-methyl-D-erythritol 2-phosphate + ADP + H(+). Its pathway is isoprenoid biosynthesis; isopentenyl diphosphate biosynthesis via DXP pathway; isopentenyl diphosphate from 1-deoxy-D-xylulose 5-phosphate: step 3/6. In terms of biological role, catalyzes the phosphorylation of the position 2 hydroxy group of 4-diphosphocytidyl-2C-methyl-D-erythritol. The protein is 4-diphosphocytidyl-2-C-methyl-D-erythritol kinase of Synechococcus sp. (strain CC9311).